The chain runs to 274 residues: NADPH-dependent 7-cyano-7-deazaguanine reductase (274 aa).

Substrate is bound at residue 80–82; the sequence is VES. 82–83 lines the NADPH pocket; sequence SK. The active-site Thioimide intermediate is the Cys-181. Asp-188 functions as the Proton donor in the catalytic mechanism. 220 to 221 lines the substrate pocket; the sequence is HE. 249–250 is a binding site for NADPH; that stretch reads RG.

The protein belongs to the GTP cyclohydrolase I family. QueF type 2 subfamily. In terms of assembly, homodimer.

The protein localises to the cytoplasm. It carries out the reaction 7-aminomethyl-7-carbaguanine + 2 NADP(+) = 7-cyano-7-deazaguanine + 2 NADPH + 3 H(+). The protein operates within tRNA modification; tRNA-queuosine biosynthesis. Functionally, catalyzes the NADPH-dependent reduction of 7-cyano-7-deazaguanine (preQ0) to 7-aminomethyl-7-deazaguanine (preQ1). The chain is NADPH-dependent 7-cyano-7-deazaguanine reductase from Burkholderia lata (strain ATCC 17760 / DSM 23089 / LMG 22485 / NCIMB 9086 / R18194 / 383).